A 124-amino-acid chain; its full sequence is Alpha-amylase inhibitor 0.53 (124 aa).

4 disulfides stabilise this stretch: Cys-20/Cys-41, Cys-28/Cys-83, Cys-42/Cys-99, and Cys-54/Cys-115.

The protein belongs to the protease inhibitor I6 (cereal trypsin/alpha-amylase inhibitor) family. Homodimer. Post-translationally, the disulfide bonds are essential for the inhibitor activity. As to expression, endosperm.

It localises to the secreted. Alpha-amylase inhibitor. The sequence is that of Alpha-amylase inhibitor 0.53 from Triticum aestivum (Wheat).